We begin with the raw amino-acid sequence, 418 residues long: ATP phosphoribosyltransferase regulatory subunit (418 aa).

It belongs to the class-II aminoacyl-tRNA synthetase family. HisZ subfamily. In terms of assembly, heteromultimer composed of HisG and HisZ subunits.

Its subcellular location is the cytoplasm. It participates in amino-acid biosynthesis; L-histidine biosynthesis; L-histidine from 5-phospho-alpha-D-ribose 1-diphosphate: step 1/9. Functionally, required for the first step of histidine biosynthesis. May allow the feedback regulation of ATP phosphoribosyltransferase activity by histidine. The chain is ATP phosphoribosyltransferase regulatory subunit from Acetivibrio thermocellus (strain ATCC 27405 / DSM 1237 / JCM 9322 / NBRC 103400 / NCIMB 10682 / NRRL B-4536 / VPI 7372) (Clostridium thermocellum).